Reading from the N-terminus, the 156-residue chain is Large ribosomal subunit protein uL15 (156 aa).

The tract at residues 25–49 (RGIGCGKGKTSGRGHKGQKARSGTS) is disordered. Residues 34–43 (TSGRGHKGQK) show a composition bias toward basic residues.

It belongs to the universal ribosomal protein uL15 family. In terms of assembly, part of the 50S ribosomal subunit.

In terms of biological role, binds to the 23S rRNA. The sequence is that of Large ribosomal subunit protein uL15 from Wolbachia sp. subsp. Brugia malayi (strain TRS).